Consider the following 1046-residue polypeptide: Protein jim lovell (1046 aa).

The interval 54–109 is disordered; it reads TSDHAPMHSTPPTTPPTPPPLPLNMSQSASAVTEAATPENSLPATPPSEGALAVPS. Pro residues predominate over residues 65-75; sequence PTTPPTPPPLP. The BTB domain maps to 140 to 205; it reads VDVTLVCAET…MYRGEISVPQ (66 aa). Disordered regions lie at residues 290–342, 355–501, 632–655, 686–719, 758–791, 851–947, and 998–1046; these read LRRK…DAES, AERD…KLQD, PPFG…PGQA, EFGP…GMSS, RDMP…RSWT, EMLQ…APNA, and DCKS…TGHD. A compositionally biased stretch (basic and acidic residues) spans 294 to 303; sequence REQESDRDLE. A compositionally biased stretch (basic residues) spans 315 to 324; it reads PRRKQARPRR. The span at 365-380 shows a compositional bias: polar residues; the sequence is QDNSQGEAEKISSSPA. The span at 383-412 shows a compositional bias: basic and acidic residues; sequence LVERAKEQKSMKEEGSDQPRSLNENHHQLE. The span at 413-432 shows a compositional bias: acidic residues; sequence LDDEDDDDQDHEEEEEQDIE. Positions 433–443 are enriched in basic and acidic residues; the sequence is ELIHTTNELRR. Positions 445-454 are enriched in low complexity; that stretch reads AAAAAANAAA. Gly residues predominate over residues 636–651; the sequence is GHNGGHPGNSGPGNGC. The span at 703–714 shows a compositional bias: pro residues; that stretch reads DGPPHPPSPLPF. Residues 768–777 are compositionally biased toward basic residues; sequence LKKKMPRPKG. Residues 781-833 form the HTH psq-type domain; it reads APRGGPPRSWTNTELTEALQHVWNKKMTTSQASRIFGIPYNSLLMYVRGKYGK. The span at 866 to 881 shows a compositional bias: basic and acidic residues; it reads KNEKSKERKEKEKDKN. Low complexity-rich tracts occupy residues 882 to 897 and 912 to 925; these read SMSS…SQGG and LGPM…LGLP.

In terms of tissue distribution, initially expressed at blastoderm stage, transient accumulation at dorso-lateral positions of the embryo and differences along the longitudinal axis. At later stages of embryogenesis, expression is found exclusively in neural anlagen. Expressed in 4 posterior-most ventral unpaired median interneurons (VUM) neurons, VUM interneurons and one progeny of the median neuroblast (MNB).

The protein localises to the nucleus. Its function is as follows. Has a regulatory role during midline cell development. The chain is Protein jim lovell (lov) from Drosophila melanogaster (Fruit fly).